The chain runs to 128 residues: DNA-directed RNA polymerase subunit omega (128 aa).

Belongs to the RNA polymerase subunit omega family. The RNAP catalytic core consists of 2 alpha, 1 beta, 1 beta' and 1 omega subunit. When a sigma factor is associated with the core the holoenzyme is formed, which can initiate transcription.

It carries out the reaction RNA(n) + a ribonucleoside 5'-triphosphate = RNA(n+1) + diphosphate. Functionally, promotes RNA polymerase assembly. Latches the N- and C-terminal regions of the beta' subunit thereby facilitating its interaction with the beta and alpha subunits. The protein is DNA-directed RNA polymerase subunit omega of Neorickettsia sennetsu (strain ATCC VR-367 / Miyayama) (Ehrlichia sennetsu).